The primary structure comprises 278 residues: Urease accessory protein UreD (278 aa).

Belongs to the UreD family. In terms of assembly, ureD, UreF and UreG form a complex that acts as a GTP-hydrolysis-dependent molecular chaperone, activating the urease apoprotein by helping to assemble the nickel containing metallocenter of UreC. The UreE protein probably delivers the nickel.

The protein localises to the cytoplasm. Its function is as follows. Required for maturation of urease via the functional incorporation of the urease nickel metallocenter. This Staphylococcus epidermidis (strain ATCC 12228 / FDA PCI 1200) protein is Urease accessory protein UreD.